The sequence spans 857 residues: Bifunctional levopimaradiene synthase, chloroplastic (857 aa).

The transit peptide at 1 to 33 directs the protein to the chloroplast; sequence MALPSSSLSSQIHTGATTQCIPHFHGSLNAGTS. Substrate is bound at residue Lys-257. Residues Asp-390 and Asp-392 each coordinate Mg(2+). A DXDD motif motif is present at residues 390 to 393; that stretch reads DIDD. Lys-477 contributes to the substrate binding site. The Mg(2+) site is built by Asp-609, Asp-613, Asn-753, Thr-757, and Glu-761. Positions 609-613 match the DDXXD motif motif; it reads DDLYD.

Belongs to the terpene synthase family. Tpsd subfamily. Mg(2+) serves as cofactor.

The protein resides in the plastid. The protein localises to the chloroplast. The enzyme catalyses (2E,6E,10E)-geranylgeranyl diphosphate = (+)-copalyl diphosphate. It carries out the reaction (+)-copalyl diphosphate = abieta-7,13-diene + diphosphate. The catalysed reaction is (+)-copalyl diphosphate = abieta-8(14),12-diene + diphosphate. It catalyses the reaction (+)-copalyl diphosphate = neoabietadiene + diphosphate. It participates in terpene metabolism; oleoresin biosynthesis. In terms of biological role, involved in defensive oleoresin formation in conifers in response to insect attack or other injury. Involved in diterpene (C20) olefins biosynthesis. Bifunctional enzyme that catalyzes two sequential cyclizations of geranylgeranyl diphosphate (GGPP) to levopimaradiene. Levopimaradiene is the major products of the enzyme with abietadiene and neoabietadiene. No activity with farnesyl diphosphate (FPP) as substrate. The polypeptide is Bifunctional levopimaradiene synthase, chloroplastic (Pinus banksiana (Jack pine)).